Here is a 574-residue protein sequence, read N- to C-terminus: Sorting nexin-33 (574 aa).

Residues 1–61 (MALKGRALYD…PASYVEIVRS (61 aa)) enclose the SH3 domain. The disordered stretch occupies residues 68-119 (ADYSSSPAGSPGAQVSLYNSPSVASPARSGGGSGFLSNQGSFEEDDDDDWDD). Phosphoserine is present on residues Ser-77 and Ser-92. Acidic residues predominate over residues 109-119 (FEEDDDDDWDD). Residues 230 to 340 (FACSVEDPTK…HFLSCLDDKQ (111 aa)) form the PX domain. Residues 371–574 (LQDVEDRVDT…EKTLRMYDNL (204 aa)) form the BAR domain.

It belongs to the sorting nexin family. As to quaternary structure, homodimer (via BAR domain). Interacts with ADAM15. Interacts with FASLG. Interacts (via SH3 domain) with DNM1 and DNM2. Interacts with WASL. Interacts with FCHSD1 (via the F-BAR domain). Phosphorylated. Detected in heart and pancreas.

It localises to the cytoplasm. The protein resides in the cytosol. The protein localises to the membrane. Its subcellular location is the cytoplasmic vesicle membrane. In terms of biological role, plays a role in the reorganization of the cytoskeleton, endocytosis and cellular vesicle trafficking via its interactions with membranes, WASL, DNM1 and DNM2. Acts both during interphase and at the end of mitotic cell divisions. Required for efficient progress through mitosis and cytokinesis. Required for normal formation of the cleavage furrow at the end of mitosis. Modulates endocytosis of cell-surface proteins, such as APP and PRNP; this then modulates the secretion of APP and PRNP peptides. Promotes membrane tubulation (in vitro). May promote the formation of macropinosomes. This Homo sapiens (Human) protein is Sorting nexin-33 (SNX33).